Here is a 324-residue protein sequence, read N- to C-terminus: Putative ribose-phosphate pyrophosphokinase 2 (324 aa).

ATP-binding positions include 43–45 (DGE) and 102–103 (RQ). Histidine 136 lines the Mg(2+) pocket. Residues aspartate 225 and 229–233 (NTGKT) contribute to the D-ribose 5-phosphate site.

It belongs to the ribose-phosphate pyrophosphokinase family. Class I subfamily. Homohexamer. It depends on Mg(2+) as a cofactor.

It is found in the cytoplasm. The enzyme catalyses D-ribose 5-phosphate + ATP = 5-phospho-alpha-D-ribose 1-diphosphate + AMP + H(+). It functions in the pathway metabolic intermediate biosynthesis; 5-phospho-alpha-D-ribose 1-diphosphate biosynthesis; 5-phospho-alpha-D-ribose 1-diphosphate from D-ribose 5-phosphate (route I): step 1/1. Its function is as follows. Involved in the biosynthesis of the central metabolite phospho-alpha-D-ribosyl-1-pyrophosphate (PRPP) via the transfer of pyrophosphoryl group from ATP to 1-hydroxyl of ribose-5-phosphate (Rib-5-P). This Streptococcus agalactiae serotype III (strain NEM316) protein is Putative ribose-phosphate pyrophosphokinase 2.